Reading from the N-terminus, the 1207-residue chain is DNA-directed RNA polymerase subunit beta' (1207 aa).

Zn(2+) contacts are provided by Cys-60, Cys-62, Cys-75, and Cys-78. Mg(2+) contacts are provided by Asp-449, Asp-451, and Asp-453. Residues Cys-822, Cys-896, Cys-903, and Cys-906 each coordinate Zn(2+).

Belongs to the RNA polymerase beta' chain family. The RNAP catalytic core consists of 2 alpha, 1 beta, 1 beta' and 1 omega subunit. When a sigma factor is associated with the core the holoenzyme is formed, which can initiate transcription. Mg(2+) is required as a cofactor. Zn(2+) serves as cofactor.

It catalyses the reaction RNA(n) + a ribonucleoside 5'-triphosphate = RNA(n+1) + diphosphate. In terms of biological role, DNA-dependent RNA polymerase catalyzes the transcription of DNA into RNA using the four ribonucleoside triphosphates as substrates. The sequence is that of DNA-directed RNA polymerase subunit beta' from Staphylococcus aureus (strain USA300).